Consider the following 268-residue polypeptide: Helix-loop-helix protein 25 (268 aa).

The span at 1–23 (MPKVIQSSMSDYRSVPYNQTPKS) shows a compositional bias: polar residues. The disordered stretch occupies residues 1-29 (MPKVIQSSMSDYRSVPYNQTPKSASERKR). The basic motif stretch occupies residues 92–105 (ERRKVKTEREKIRR). One can recognise a bHLH domain in the interval 92-149 (ERRKVKTEREKIRRKKQDDCYAELKFFILNKQMGSYEQRLKLERITILEIIIDYIKHN). The segment at 106–149 (KKQDDCYAELKFFILNKQMGSYEQRLKLERITILEIIIDYIKHN) is helix-loop-helix motif.

It localises to the nucleus. Functionally, probable transcription factor. Modulates lifespan and also recovery from the developmentally arrested larval state known as dauer, perhaps acting upstream of phosphatase PTEN/daf-18. Regulates expression of genes involved in cell division, cell-cycle regulation, and sexual reproduction, including daf-18. The sequence is that of Helix-loop-helix protein 25 from Caenorhabditis elegans.